The chain runs to 713 residues: Calpain-1 catalytic subunit (713 aa).

Residues 55–354 (LFQDDAFPPV…FTKLEICNLT (300 aa)) form the Calpain catalytic domain. Residues Cys-115, His-272, and Asn-296 contribute to the active site. At Thr-354 the chain carries Phosphothreonine. A domain III region spans residues 355–525 (PDALKSRTLR…KKAGTQELDD (171 aa)). Positions 526–541 (QIQANLPDEKVLSEEE) are linker. Residues 542 to 712 (IDDNFKTLFS…LFKWLQLTMF (171 aa)) are domain IV. EF-hand domains follow at residues 557 to 575 (DMEISVKELQTILNRIISK), 584 to 609 (FSLESCRSMVNLMDRDGNGKLGLVEF), 614 to 649 (NRIRNYLTIFRKFDLDKSGSMSAYEMRMAIEAAGFK), and 679 to 713 (VRLETMFRFFKILDTDLDGVVTFDLFKWLQLTMFA). Ca(2+) is bound by residues Asp-597, Asp-599, Asn-601, Lys-603, Glu-608, Asp-627, Asp-629, Ser-631, Ser-633, and Glu-638.

This sequence belongs to the peptidase C2 family. Forms a heterodimer with a small (regulatory) subunit CAPNS1. Ca(2+) serves as cofactor. Post-translationally, undergoes calcium-induced successive autoproteolytic cleavages that generate a membrane-bound 78 kDa active form and an intracellular 75 kDa active form. Calpastatin reduces with high efficiency the transition from 78 kDa to 75 kDa calpain forms.

It localises to the cytoplasm. The protein localises to the cell membrane. It carries out the reaction Broad endopeptidase specificity.. Activated by micromolar concentrations of calcium and inhibited by calpastatin. Its function is as follows. Calcium-regulated non-lysosomal thiol-protease which catalyzes limited proteolysis of substrates involved in cytoskeletal remodeling and signal transduction. Proteolytically cleaves CTBP1 at 'Asn-364', 'Gly-377' and 'His-399'. Cleaves and activates caspase-7 (CASP7). In Rattus norvegicus (Rat), this protein is Calpain-1 catalytic subunit.